The chain runs to 46 residues: Protein PsbN (46 aa).

Residues 10 to 30 (VAIAVLAALLGLTGFGVYTAF) traverse the membrane as a helical segment.

It belongs to the PsbN family.

The protein resides in the cellular thylakoid membrane. In terms of biological role, may play a role in photosystem I and II biogenesis. This chain is Protein PsbN, found in Synechococcus sp. (strain WH7803).